The chain runs to 474 residues: Aspartyl/glutamyl-tRNA(Asn/Gln) amidotransferase subunit B (474 aa).

Belongs to the GatB/GatE family. GatB subfamily. Heterotrimer of A, B and C subunits.

It carries out the reaction L-glutamyl-tRNA(Gln) + L-glutamine + ATP + H2O = L-glutaminyl-tRNA(Gln) + L-glutamate + ADP + phosphate + H(+). It catalyses the reaction L-aspartyl-tRNA(Asn) + L-glutamine + ATP + H2O = L-asparaginyl-tRNA(Asn) + L-glutamate + ADP + phosphate + 2 H(+). In terms of biological role, allows the formation of correctly charged Asn-tRNA(Asn) or Gln-tRNA(Gln) through the transamidation of misacylated Asp-tRNA(Asn) or Glu-tRNA(Gln) in organisms which lack either or both of asparaginyl-tRNA or glutaminyl-tRNA synthetases. The reaction takes place in the presence of glutamine and ATP through an activated phospho-Asp-tRNA(Asn) or phospho-Glu-tRNA(Gln). The sequence is that of Aspartyl/glutamyl-tRNA(Asn/Gln) amidotransferase subunit B from Coprothermobacter proteolyticus (strain ATCC 35245 / DSM 5265 / OCM 4 / BT).